The primary structure comprises 384 residues: dTDP-dihydrostreptose--streptidine-6-phosphate dihydrostreptosyltransferase (384 aa).

It catalyses the reaction dTDP-L-dihydrostreptose + streptidine 6-phosphate = O-(1-&gt;4)-alpha-L-dihydrostreptosyl-streptidine 6-phosphate + dTDP + H(+). It participates in antibiotic biosynthesis; streptomycin biosynthesis. In terms of biological role, is probably a dihydrostreptosyl glycosyltransferase, involved in the first glycosylation step condensing streptidine-6-phosphate and dihydrostreptose. The chain is dTDP-dihydrostreptose--streptidine-6-phosphate dihydrostreptosyltransferase (strH) from Streptomyces griseus.